The sequence spans 371 residues: DNA repair protein RAD14 (371 aa).

The interval 26 to 48 is disordered; sequence LSSDQLNRIESRNEPLKTRPLAV. Residues 32-42 show a composition bias toward basic and acidic residues; sequence NRIESRNEPLK. 4 residues coordinate Zn(2+): C191, C194, C213, and C216. A zinc finger spans residues 191–216; it reads CIECHINIEMDPVLHDVFKLQVCKQC.

The protein belongs to the XPA family. Two monomers bind to kinked/damaged DNA (construct with only the C-terminal DNA-binding domain). Component of the nucleotide excision repair factor 1 (NEF1) complex consisting of RAD1, RAD10 and RAD14.

It localises to the nucleus. In terms of biological role, involved in nucleotide excision repair. Binds specifically to damaged DNA. Required for the incision step. The polypeptide is DNA repair protein RAD14 (RAD14) (Saccharomyces cerevisiae (strain ATCC 204508 / S288c) (Baker's yeast)).